The primary structure comprises 1141 residues: DNA-directed RNA polymerase subunit beta (1141 aa).

Belongs to the RNA polymerase beta chain family. As to quaternary structure, the RNAP catalytic core consists of 2 alpha, 1 beta, 1 beta' and 1 omega subunit. When a sigma factor is associated with the core the holoenzyme is formed, which can initiate transcription.

It catalyses the reaction RNA(n) + a ribonucleoside 5'-triphosphate = RNA(n+1) + diphosphate. Its function is as follows. DNA-dependent RNA polymerase catalyzes the transcription of DNA into RNA using the four ribonucleoside triphosphates as substrates. This is DNA-directed RNA polymerase subunit beta from Frankia alni (strain DSM 45986 / CECT 9034 / ACN14a).